A 902-amino-acid chain; its full sequence is Protein translocase subunit SecA (902 aa).

ATP-binding positions include Gln89, 107–111 (GEGKT), and Asp502. Cys884, Cys886, Cys895, and His896 together coordinate Zn(2+).

It belongs to the SecA family. As to quaternary structure, monomer and homodimer. Part of the essential Sec protein translocation apparatus which comprises SecA, SecYEG and auxiliary proteins SecDF-YajC and YidC. Requires Zn(2+) as cofactor.

It is found in the cell inner membrane. It localises to the cytoplasm. The catalysed reaction is ATP + H2O + cellular proteinSide 1 = ADP + phosphate + cellular proteinSide 2.. Functionally, part of the Sec protein translocase complex. Interacts with the SecYEG preprotein conducting channel. Has a central role in coupling the hydrolysis of ATP to the transfer of proteins into and across the cell membrane, serving both as a receptor for the preprotein-SecB complex and as an ATP-driven molecular motor driving the stepwise translocation of polypeptide chains across the membrane. The sequence is that of Protein translocase subunit SecA from Agrobacterium fabrum (strain C58 / ATCC 33970) (Agrobacterium tumefaciens (strain C58)).